The sequence spans 225 residues: MIIYINDKPCNAKVGDLLLNTAKLNKAHIGYICGGNGICQSCFVYVLEGAECLSEPGEDEKAFISDKLFAEGGRLACRTTIVKEGTIRVLTRAEKFRRIVLGLNVPGFITYAQTIGYNVTNKLPSGVSSIVSRVQSGRLNPVDTIGKIASGLSPASQLVYNNFIEAFPFMQAPVNMVSGVAKSAIDNASGALCTISGGRLHLPGSTCTAHDKPAEAIERITISAK.

One can recognise a 2Fe-2S ferredoxin-type domain in the interval 1–95 (MIIYINDKPC…TIRVLTRAEK (95 aa)). [2Fe-2S] cluster-binding residues include Cys-33, Cys-39, Cys-42, and Cys-77.

Requires [2Fe-2S] cluster as cofactor.

It localises to the chlorosome. Functionally, could play a direct role in the oxidation or reduction of the quenching species formed in the chlorosome. The polypeptide is Chlorosome protein J (csmJ) (Chlorobaculum tepidum (strain ATCC 49652 / DSM 12025 / NBRC 103806 / TLS) (Chlorobium tepidum)).